The chain runs to 448 residues: Phosphoglucosamine mutase (448 aa).

The active-site Phosphoserine intermediate is serine 100. 4 residues coordinate Mg(2+): serine 100, aspartate 240, aspartate 242, and aspartate 244. The residue at position 100 (serine 100) is a Phosphoserine.

Belongs to the phosphohexose mutase family. Mg(2+) serves as cofactor. Post-translationally, activated by phosphorylation.

The catalysed reaction is alpha-D-glucosamine 1-phosphate = D-glucosamine 6-phosphate. Functionally, catalyzes the conversion of glucosamine-6-phosphate to glucosamine-1-phosphate. In Clostridium beijerinckii (strain ATCC 51743 / NCIMB 8052) (Clostridium acetobutylicum), this protein is Phosphoglucosamine mutase.